A 336-amino-acid chain; its full sequence is Glyceraldehyde-3-phosphate dehydrogenase, chromosomal (336 aa).

Residues 12–13 (RI), aspartate 37, arginine 81, and serine 123 contribute to the NAD(+) site. D-glyceraldehyde 3-phosphate is bound by residues 154–156 (SCT) and threonine 185. Cysteine 155 serves as the catalytic Nucleophile. Residue asparagine 186 coordinates NAD(+). D-glyceraldehyde 3-phosphate contacts are provided by residues arginine 200, 213–214 (TG), and arginine 236. Asparagine 317 is an NAD(+) binding site.

The protein belongs to the glyceraldehyde-3-phosphate dehydrogenase family. In terms of assembly, homotetramer.

It carries out the reaction D-glyceraldehyde 3-phosphate + phosphate + NAD(+) = (2R)-3-phospho-glyceroyl phosphate + NADH + H(+). The protein operates within carbohydrate biosynthesis; Calvin cycle. Could be involved in carbon fixation as a component of the Calvin cycle. Catalyzes the oxidative phosphorylation of glyceraldehyde 3-phosphate (G3P) to 1,3-bisphosphoglycerate (BPG) using the cofactor NAD. The first reaction step involves the formation of a hemiacetal intermediate between G3P and a cysteine residue, and this hemiacetal intermediate is then oxidized to a thioester, with concomitant reduction of NAD to NADH. The reduced NADH is then exchanged with the second NAD, and the thioester is attacked by a nucleophilic inorganic phosphate to produce BPG. This Cupriavidus necator (strain ATCC 17699 / DSM 428 / KCTC 22496 / NCIMB 10442 / H16 / Stanier 337) (Ralstonia eutropha) protein is Glyceraldehyde-3-phosphate dehydrogenase, chromosomal (cbbGC).